Reading from the N-terminus, the 1025-residue chain is RNA cytidine acetyltransferase (1025 aa).

287 to 296 (GRGKSAALGL) provides a ligand contact to ATP. K426 is modified (N6-acetyllysine). R470 is an ATP binding site. Residues 558-753 (CLLPPVPPTQ…HSCIMLKTLT (196 aa)) enclose the N-acetyltransferase domain. Residues 629-631 (IAV) and 636-642 (QGMGYGS) contribute to the acetyl-CoA site. The interval 702-1025 (PAERLDYLGV…KKDMKLKRKK (324 aa)) is required for localization to the nucleolus and midbody. T716 is subject to Phosphothreonine. Acetyl-CoA is bound at residue R725. Phosphoserine occurs at positions 934, 984, and 987. The segment at 990-1025 (SDKKRKLEAKQEPKQSKKLKNRETKNKKDMKLKRKK) is disordered. The span at 997–1018 (EAKQEPKQSKKLKNRETKNKKD) shows a compositional bias: basic and acidic residues.

It belongs to the RNA cytidine acetyltransferase family. NAT10 subfamily. In terms of assembly, part of the small subunit (SSU) processome, composed of more than 70 proteins and the RNA chaperone small nucleolar RNA (snoRNA) U3. Interacts with THUMPD1. Interacts with SUN1 (via N-terminus). Interacts with TERT. Acetylation at Lys-426 is required to activation of rRNA transcription. May be autoacetylated; however ability to autoacetylate in vivo requires additional evidences.

It localises to the nucleus. The protein localises to the nucleolus. It is found in the midbody. The catalysed reaction is a cytidine in 18S rRNA + acetyl-CoA + ATP + H2O = an N(4)-acetylcytidine in 18S rRNA + ADP + phosphate + CoA + H(+). It catalyses the reaction a cytidine in tRNA + acetyl-CoA + ATP + H2O = an N(4)-acetylcytidine in tRNA + ADP + phosphate + CoA + H(+). The enzyme catalyses a cytidine in mRNA + acetyl-CoA + ATP + H2O = an N(4)-acetylcytidine in mRNA + ADP + phosphate + CoA + H(+). Specifically inhibited by remodelin (4-[2-(2-cyclopentylidenehydrazinyl)-4-thiazolyl]-benzonitrile, monohydrobromide), a hydrobromide salt molecule. Remodelin can improve nuclear architecture, chromatin organization and fitness of cells from patients suffering from Hutchinson-Gilford progeria syndrome (HGPS); molecular mechanisms explaining the relation between NAT10 activity and nuclear architecture are however unclear. Its function is as follows. RNA cytidine acetyltransferase that catalyzes the formation of N(4)-acetylcytidine (ac4C) modification on mRNAs, 18S rRNA and tRNAs. Catalyzes ac4C modification of a broad range of mRNAs, enhancing mRNA stability and translation. mRNA ac4C modification is frequently present within wobble cytidine sites and promotes translation efficiency. Mediates the formation of ac4C at position 1842 in 18S rRNA. May also catalyze the formation of ac4C at position 1337 in 18S rRNA. Required for early nucleolar cleavages of precursor rRNA at sites A0, A1 and A2 during 18S rRNA synthesis. Catalyzes the formation of ac4C in serine and leucine tRNAs. Requires the tRNA-binding adapter protein THUMPD1 for full tRNA acetyltransferase activity but not for 18S rRNA acetylation. In addition to RNA acetyltransferase activity, also able to acetylate lysine residues of proteins, such as histones, microtubules, p53/TP53 and MDM2, in vitro. The relevance of the protein lysine acetyltransferase activity is however unsure in vivo. Activates telomerase activity by stimulating the transcription of TERT, and may also regulate telomerase function by affecting the balance of telomerase subunit assembly, disassembly, and localization. Involved in the regulation of centrosome duplication by acetylating CENATAC during mitosis, promoting SASS6 proteasome degradation. Part of the small subunit (SSU) processome, first precursor of the small eukaryotic ribosomal subunit. During the assembly of the SSU processome in the nucleolus, many ribosome biogenesis factors, an RNA chaperone and ribosomal proteins associate with the nascent pre-rRNA and work in concert to generate RNA folding, modifications, rearrangements and cleavage as well as targeted degradation of pre-ribosomal RNA by the RNA exosome. The chain is RNA cytidine acetyltransferase from Homo sapiens (Human).